The sequence spans 391 residues: S-adenosylmethionine synthase 1 (391 aa).

Glutamate 9 contacts Mg(2+). ATP is bound at residue histidine 15. Glutamate 43 lines the K(+) pocket. Residues glutamate 56 and glutamine 99 each coordinate L-methionine. ATP-binding positions include 167–169 (DGK), 235–238 (SGRF), aspartate 246, 252–253 (RK), alanine 269, lysine 273, and lysine 277. Aspartate 246 is a binding site for L-methionine. Residue lysine 277 coordinates L-methionine.

Belongs to the AdoMet synthase family. As to quaternary structure, homotetramer. Mn(2+) is required as a cofactor. Requires Mg(2+) as cofactor. The cofactor is Co(2+). It depends on K(+) as a cofactor.

Its subcellular location is the cytoplasm. It catalyses the reaction L-methionine + ATP + H2O = S-adenosyl-L-methionine + phosphate + diphosphate. The protein operates within amino-acid biosynthesis; S-adenosyl-L-methionine biosynthesis; S-adenosyl-L-methionine from L-methionine: step 1/1. In terms of biological role, catalyzes the formation of S-adenosylmethionine from methionine and ATP. The reaction comprises two steps that are both catalyzed by the same enzyme: formation of S-adenosylmethionine (AdoMet) and triphosphate, and subsequent hydrolysis of the triphosphate. The chain is S-adenosylmethionine synthase 1 (METK1) from Vitis vinifera (Grape).